A 390-amino-acid polypeptide reads, in one-letter code: MALPLYLVGLSHKTAPLEVRERAALDPVVALPAALSALGKGVVLSTCNRTELYGVGSPEKARAFLLSRGVVPRHLYVKEGVEALRHLYRVAAGLDSLVVGEAQILGQVREALFLARRQGATESLLEKAFQSAIALGKRARSETGIGMGAVSVAYAALDLALAVYGDLSGLSVAVLGAGEMAELFLTHLKAHGVGRILVVNRTEEKAQALAERFGGEAFGLPALPQVLRQADLVVASAAAPHYLVGPEDLPKRAKPLFLIDIALPRNIDPRVGDLPHAYLYNLDDLKRVVDRNLRARAGEIPKVEALIEKALGDYMEWYAGHRVREAIRALEAWARVQAAKAQPEAGPVELEKAAGRLAHPFILGLKRRALDRVGGPPCPEDCLLYRLSRT.

Substrate-binding positions include Thr46–Arg49, Ser96, Glu101–Gln103, and Gln107. The active-site Nucleophile is the Cys47. Gly176 to Ala181 is a binding site for NADP(+).

This sequence belongs to the glutamyl-tRNA reductase family. In terms of assembly, homodimer.

The catalysed reaction is (S)-4-amino-5-oxopentanoate + tRNA(Glu) + NADP(+) = L-glutamyl-tRNA(Glu) + NADPH + H(+). The protein operates within porphyrin-containing compound metabolism; protoporphyrin-IX biosynthesis; 5-aminolevulinate from L-glutamyl-tRNA(Glu): step 1/2. In terms of biological role, catalyzes the NADPH-dependent reduction of glutamyl-tRNA(Glu) to glutamate 1-semialdehyde (GSA). This is Glutamyl-tRNA reductase from Thermus thermophilus (strain ATCC BAA-163 / DSM 7039 / HB27).